Reading from the N-terminus, the 781-residue chain is Coiled-coil and C2 domain-containing protein 1-like (781 aa).

5 disordered regions span residues 32-63, 94-134, 187-296, 313-373, and 403-447; these read MGRV…NVPG, ELNG…APNS, ESEI…AKES, CSAD…TEGN, and GELP…VEGK. The segment covering 37 to 59 has biased composition (low complexity); the sequence is RPAAPARGAPPAARGRPAPAAPA. The segment covering 98 to 107 has biased composition (gly residues); sequence LVGGGGGGGA. Positions 108-118 are enriched in low complexity; sequence APTVPTRAAPR. Pro residues-rich tracts occupy residues 119–129 and 204–222; these read APGPSGPPPSA and PLPP…PAPP. Over residues 244 to 256 the composition is skewed to low complexity; it reads APAPTAAAPPATK. Over residues 269 to 280 the composition is skewed to basic residues; the sequence is ILHHRRDLHKQN. The span at 285-296 shows a compositional bias: basic and acidic residues; it reads IADKDKESAKES. The span at 324 to 341 shows a compositional bias: pro residues; the sequence is PPSPPPYRKPAPPQPQAP. Residues 363–373 are compositionally biased toward basic and acidic residues; the sequence is KMAEKAKTEGN. The C2 domain maps to 605–741; the sequence is YEMRQIPSAD…EHSAEMEESL (137 aa).

Belongs to the CC2D1 family.

This is Coiled-coil and C2 domain-containing protein 1-like from Caenorhabditis elegans.